An 874-amino-acid chain; its full sequence is Probable inorganic carbon transporter subunit DabA (874 aa).

Residues C398, D400, H580, and C595 each coordinate Zn(2+).

The protein belongs to the inorganic carbon transporter (TC 9.A.2) DabA family. Forms a complex with DabB. It depends on Zn(2+) as a cofactor.

The protein localises to the cell membrane. In terms of biological role, part of an energy-coupled inorganic carbon pump. The protein is Probable inorganic carbon transporter subunit DabA of Bacillus cytotoxicus (strain DSM 22905 / CIP 110041 / 391-98 / NVH 391-98).